Consider the following 85-residue polypeptide: Small ribosomal subunit protein bS18 (85 aa).

Belongs to the bacterial ribosomal protein bS18 family. As to quaternary structure, part of the 30S ribosomal subunit. Forms a tight heterodimer with protein bS6.

Its function is as follows. Binds as a heterodimer with protein bS6 to the central domain of the 16S rRNA, where it helps stabilize the platform of the 30S subunit. The protein is Small ribosomal subunit protein bS18 of Helicobacter pylori (strain Shi470).